The primary structure comprises 61 residues: Metallothionein-2 (61 aa).

The residue at position 1 (Met1) is an N-acetylmethionine. The tract at residues 1–29 (MDPNCSCASDGSCSCAGACKCKQCKCTSC) is beta. Residues Cys5, Cys7, Cys13, Cys15, Cys19, Cys21, Cys24, Cys26, Cys29, Cys33, Cys34, Cys36, Cys37, Cys41, Cys44, Cys48, Cys50, and Cys57 each coordinate a divalent metal cation. Residues 30-61 (KKSCCSCCPVGCAKCSQGCICKEASDKCSCCA) are alpha. Ser58 is modified (phosphoserine). A divalent metal cation contacts are provided by Cys59 and Cys60.

The protein belongs to the metallothionein superfamily. Type 1 family.

Metallothioneins have a high content of cysteine residues that bind various heavy metals; these proteins are transcriptionally regulated by both heavy metals and glucocorticoids. This Mus musculus (Mouse) protein is Metallothionein-2 (Mt2).